Consider the following 500-residue polypeptide: Putative DNA recombinase (500 aa).

A Resolvase/invertase-type recombinase catalytic domain is found at 1-144; it reads MIAIYVRVST…SGRLQKMKKG (144 aa). Serine 9 functions as the O-(5'-phospho-DNA)-serine intermediate in the catalytic mechanism. The recombinase DNA-binding region spans 152–288; sequence LYGYKFVKEK…QELLGQSKRK (137 aa). A coiled-coil region spans residues 372 to 448; that stretch reads KEAEQSNHLS…IQSKMKVLDD (77 aa).

The protein in the N-terminal section; belongs to the site-specific recombinase resolvase family.

In terms of biological role, putative site-specific recombinase having a very important role in sporulation. It probably plays a role in the recombination of SpoIIIC and SpoIVCB to form sigma K factor. In Bacillus subtilis (strain 168), this protein is Putative DNA recombinase (cisA).